Consider the following 365-residue polypeptide: Succinyl-diaminopimelate desuccinylase (365 aa).

Residue H64 participates in Zn(2+) binding. D66 is an active-site residue. Residue D95 participates in Zn(2+) binding. E125 serves as the catalytic Proton acceptor. Residues E126, E154, and H339 each coordinate Zn(2+).

The protein belongs to the peptidase M20A family. DapE subfamily. In terms of assembly, homodimer. It depends on Zn(2+) as a cofactor. The cofactor is Co(2+).

The catalysed reaction is N-succinyl-(2S,6S)-2,6-diaminopimelate + H2O = (2S,6S)-2,6-diaminopimelate + succinate. Its pathway is amino-acid biosynthesis; L-lysine biosynthesis via DAP pathway; LL-2,6-diaminopimelate from (S)-tetrahydrodipicolinate (succinylase route): step 3/3. Functionally, catalyzes the hydrolysis of N-succinyl-L,L-diaminopimelic acid (SDAP), forming succinate and LL-2,6-diaminopimelate (DAP), an intermediate involved in the bacterial biosynthesis of lysine and meso-diaminopimelic acid, an essential component of bacterial cell walls. The chain is Succinyl-diaminopimelate desuccinylase from Nautilia profundicola (strain ATCC BAA-1463 / DSM 18972 / AmH).